The chain runs to 277 residues: S-formylglutathione hydrolase FrmB (277 aa).

Catalysis depends on charge relay system residues S145, D221, and H254.

Belongs to the esterase D family.

The enzyme catalyses S-formylglutathione + H2O = formate + glutathione + H(+). Serine hydrolase involved in the detoxification of formaldehyde. Hydrolyzes S-formylglutathione to glutathione and formate. The protein is S-formylglutathione hydrolase FrmB (frmB) of Escherichia coli O9:H4 (strain HS).